A 215-amino-acid polypeptide reads, in one-letter code: MKTVLLTGFDPFGGENINPAWEVAKGLHEKTIGEYKIISKQVPTVFHKSISVLKEYIEELAPEIIICIGQAGGRPDITIERIAINIDDARIADNEGNQPVDVPVVEEGAIAYWSTLPMKAIVKKLREEGIPSSVSQTAGTFVCNHLFYGLMHELEKHDKKIKGGFIHIPFLPEQASNYPGQPSMSLSTIRKGIELAIEVTTTVKVDIVEVGGATH.

Catalysis depends on residues Glu80, Cys143, and His167.

The protein belongs to the peptidase C15 family. As to quaternary structure, homotetramer.

The protein resides in the cytoplasm. The catalysed reaction is Release of an N-terminal pyroglutamyl group from a polypeptide, the second amino acid generally not being Pro.. In terms of biological role, removes 5-oxoproline from various penultimate amino acid residues except L-proline. This is Pyrrolidone-carboxylate peptidase from Bacillus cereus (strain B4264).